We begin with the raw amino-acid sequence, 320 residues long: MLTRSWRQRNLASLLYSLSHRRLLSQKIPDPKHVFTDPSNNEIVDSKHFFTNPSRDNLIEEEAIAKSIEASIKNQRRRRGKQVSSALAAALFATIFGYTIGYKVLYLHEHSFIPAYPVPKARNFSSNELKHINVDEIKHLAEYKLLEKLSMHPMIKEQYGVPLHKSQGISLESRQFSVWRQDVDPCIAGILIAPIDSPKDEHTWHNVPPLCKWRITNRSVNFRSFADQVLGRVGIDSSDLIQVIKPEKDCGDFKYGRPPHHSDGPRTMHICFLGEMKLGNEDLIIFRGTCHIDLKLQQVDLLRKENDKLVRYVLYHETKE.

Residues 1-31 (MLTRSWRQRNLASLLYSLSHRRLLSQKIPDP) constitute a mitochondrion transit peptide. Residues 83-102 (VSSALAAALFATIFGYTIGY) traverse the membrane as a helical segment.

It belongs to the AIM39 family.

It localises to the mitochondrion membrane. The polypeptide is Altered inheritance of mitochondria protein 39, mitochondrial (AIM39) (Lachancea thermotolerans (strain ATCC 56472 / CBS 6340 / NRRL Y-8284) (Yeast)).